A 70-amino-acid polypeptide reads, in one-letter code: Large ribosomal subunit protein bL31 (70 aa).

Zn(2+) contacts are provided by C16, C18, C37, and C40.

It belongs to the bacterial ribosomal protein bL31 family. Type A subfamily. Part of the 50S ribosomal subunit. Zn(2+) serves as cofactor.

In terms of biological role, binds the 23S rRNA. This chain is Large ribosomal subunit protein bL31, found in Saccharophagus degradans (strain 2-40 / ATCC 43961 / DSM 17024).